Here is a 637-residue protein sequence, read N- to C-terminus: Capsid scaffolding protein (637 aa).

Residues histidine 61, serine 129, and histidine 148 each act as charge relay system in the active site. Disordered regions lie at residues 262 to 326 (PERG…PGDG), 414 to 479 (LPAA…PHET), and 502 to 608 (HAPY…EAGA). The span at 277-317 (SPAASVPAPQVAVRARQVASSSSSSSFPAPADMNPVSASGA) shows a compositional bias: low complexity. An interaction with pAP region spans residues 326–345 (GSYLWIPASHYNQLVTGQSA). Positions 428-431 (KRRR) match the Nuclear localization signal motif. Composition is skewed to basic and acidic residues over residues 432–450 (HEVEQPEYDCGRDEPDRDF) and 457–468 (ARPEPRPVDSRR). Composition is skewed to pro residues over residues 537-559 (LPPPHIAPPGPPLSGAVPPPSYP) and 566-594 (GPAPPLHQPSPAHAHPPPPPPGPTPPPAA). The segment covering 595–608 (SLPQPEAPGAEAGA) has biased composition (low complexity). The segment at 617–637 (HVNVDTARAADLFVSQMMGSR) is interaction with major capsid protein.

The protein belongs to the herpesviridae capsid scaffolding protein family. In terms of assembly, homomultimer. Interacts with major capsid protein. As to quaternary structure, exists in a monomer-dimer equilibrium with the dimer being the active species. Capsid scaffolding protein is cleaved by assemblin after formation of the spherical procapsid. As a result, the capsid obtains its mature, icosahedral shape. Cleavages occur at two or more sites: release (R-site) and maturation (M-site).

It localises to the host cytoplasm. It is found in the host nucleus. The enzyme catalyses Cleaves -Ala-|-Ser- and -Ala-|-Ala- bonds in the scaffold protein.. Functionally, acts as a scaffold protein by binding major capsid protein in the cytoplasm, inducing the nuclear localization of both proteins. Multimerizes in the nucleus such as major capsid protein forms the icosahedral T=16 capsid. Autocatalytic cleavage releases the assembly protein, and subsequently abolishes interaction with major capsid protein. Cleavages products are evicted from the capsid before or during DNA packaging. Protease that plays an essential role in virion assembly within the nucleus. Catalyzes the cleavage of the assembly protein after formation of the spherical procapsid. By that cleavage, the capsid matures and gains its icosahedral shape. The cleavage sites seem to include -Ala-Ser-, -Ala-Ala-, as well as Ala-Thr bonds. Assemblin and cleavages products are evicted from the capsid before or during DNA packaging. Its function is as follows. Plays a major role in capsid assembly. Acts as a scaffold protein by binding major capsid protein. Multimerizes in the nucleus such as major capsid protein forms the icosahedral T=16 capsid. Cleaved by assemblin after capsid completion. The cleavages products are evicted from the capsid before or during DNA packaging. The polypeptide is Capsid scaffolding protein (UL26) (Homo sapiens (Human)).